The chain runs to 128 residues: MARILLLFLPGLVAVCAVHGIFMDRLASKKLCADDECVYTISLASAQEDYNAPDCRFINVKKGQQIYVYSKLVKENGAGEFWAGSVYGDGQDEMGVVGYFPRNLVKEQRVYQEATKEVPTTDIDFFCE.

A signal peptide spans 1–17 (MARILLLFLPGLVAVCA). 2 disulfide bridges follow: Cys-32–Cys-37 and Cys-55–Cys-127. One can recognise an SH3 domain in the interval 39–110 (YTISLASAQE…PRNLVKEQRV (72 aa)).

The protein belongs to the MIA/OTOR family. In terms of tissue distribution, highly expressed in cochlea.

It localises to the secreted. This Homo sapiens (Human) protein is Otoraplin (OTOR).